The sequence spans 1183 residues: DNA-directed RNA polymerase subunit beta (1183 aa).

The protein belongs to the RNA polymerase beta chain family. As to quaternary structure, the RNAP catalytic core consists of 2 alpha, 1 beta, 1 beta' and 1 omega subunit. When a sigma factor is associated with the core the holoenzyme is formed, which can initiate transcription.

The catalysed reaction is RNA(n) + a ribonucleoside 5'-triphosphate = RNA(n+1) + diphosphate. Functionally, DNA-dependent RNA polymerase catalyzes the transcription of DNA into RNA using the four ribonucleoside triphosphates as substrates. The protein is DNA-directed RNA polymerase subunit beta of Staphylococcus aureus (strain JH9).